The chain runs to 426 residues: Dihydroorotase (426 aa).

H62 and H64 together coordinate Zn(2+). Substrate is bound by residues 64-66 and N96; that span reads HLR. Residues D154, H181, H234, and D307 each contribute to the Zn(2+) site. D307 is an active-site residue. H311 is a binding site for substrate.

It belongs to the metallo-dependent hydrolases superfamily. DHOase family. Class I DHOase subfamily. Requires Zn(2+) as cofactor.

It carries out the reaction (S)-dihydroorotate + H2O = N-carbamoyl-L-aspartate + H(+). Its pathway is pyrimidine metabolism; UMP biosynthesis via de novo pathway; (S)-dihydroorotate from bicarbonate: step 3/3. Catalyzes the reversible cyclization of carbamoyl aspartate to dihydroorotate. The chain is Dihydroorotase from Syntrophus aciditrophicus (strain SB).